Here is a 420-residue protein sequence, read N- to C-terminus: UDP-N-acetylglucosamine 1-carboxyvinyltransferase (420 aa).

22-23 (KN) is a phosphoenolpyruvate binding site. UDP-N-acetyl-alpha-D-glucosamine is bound at residue arginine 93. The active-site Proton donor is cysteine 117. Position 117 is a 2-(S-cysteinyl)pyruvic acid O-phosphothioketal (cysteine 117). 2 residues coordinate UDP-N-acetyl-alpha-D-glucosamine: aspartate 307 and isoleucine 329.

It belongs to the EPSP synthase family. MurA subfamily.

It localises to the cytoplasm. The enzyme catalyses phosphoenolpyruvate + UDP-N-acetyl-alpha-D-glucosamine = UDP-N-acetyl-3-O-(1-carboxyvinyl)-alpha-D-glucosamine + phosphate. It functions in the pathway cell wall biogenesis; peptidoglycan biosynthesis. Cell wall formation. Adds enolpyruvyl to UDP-N-acetylglucosamine. The chain is UDP-N-acetylglucosamine 1-carboxyvinyltransferase from Shewanella halifaxensis (strain HAW-EB4).